Reading from the N-terminus, the 195-residue chain is FK506-binding protein 2 (195 aa).

The N-terminal stretch at 1-19 (MKAALFLSALASTAVGVVA) is a signal peptide. The PPIase FKBP-type domain occupies 39–127 (GDGVHMHYRG…VFETELVGID (89 aa)). The Prevents secretion from ER signature appears at 192-195 (HEEL).

The protein belongs to the FKBP-type PPIase family. FKBP2 subfamily.

The protein localises to the endoplasmic reticulum. It catalyses the reaction [protein]-peptidylproline (omega=180) = [protein]-peptidylproline (omega=0). With respect to regulation, inhibited by both FK506 and rapamycin. In terms of biological role, PPIases accelerate the folding of proteins. It catalyzes the cis-trans isomerization of proline imidic peptide bonds in oligopeptides. This is FK506-binding protein 2 (FPR2) from Gibberella zeae (strain ATCC MYA-4620 / CBS 123657 / FGSC 9075 / NRRL 31084 / PH-1) (Wheat head blight fungus).